We begin with the raw amino-acid sequence, 130 residues long: MSMQDPLADMLTRIRNAQMAEKSVVSMPSSTLKVAVAKVLKDEGYIAGYEVTGEAKPSLSIELKYFEGRPVIEELKRSSRPGLRQYKAVSELPKVRGGLGVSIVSTNKGVMTDRAARAAGVGGEVLCTVF.

Belongs to the universal ribosomal protein uS8 family. Part of the 30S ribosomal subunit. Contacts proteins S5 and S12.

Functionally, one of the primary rRNA binding proteins, it binds directly to 16S rRNA central domain where it helps coordinate assembly of the platform of the 30S subunit. In Pseudomonas entomophila (strain L48), this protein is Small ribosomal subunit protein uS8.